The sequence spans 65 residues: Weak toxin CM-10 (65 aa).

5 disulfides stabilise this stretch: Cys3-Cys24, Cys6-Cys11, Cys17-Cys42, Cys46-Cys57, and Cys58-Cys63.

It belongs to the three-finger toxin family. Ancestral subfamily. Orphan group II sub-subfamily. As to expression, expressed by the venom gland.

The protein resides in the secreted. In terms of biological role, binds with low affinity to muscular (alpha-1-beta-1-delta-epsilon/CHRNA1-CHRNB1-CHRND-CHRNE) and very low affinity to neuronal (alpha-7/CHRNA7) nicotinic acetylcholine receptor (nAChR). The sequence is that of Weak toxin CM-10 from Naja nivea (Cape cobra).